Reading from the N-terminus, the 653-residue chain is 1-deoxy-D-xylulose-5-phosphate synthase (653 aa).

Thiamine diphosphate is bound by residues histidine 86 and 127 to 129; that span reads GHS. Aspartate 158 lines the Mg(2+) pocket. Thiamine diphosphate-binding positions include 159–160, asparagine 187, and phenylalanine 294; that span reads GA. Asparagine 187 contacts Mg(2+). The span at 309–324 shows a compositional bias: basic and acidic residues; that stretch reads KLEKTTSEPPPKKEPR. Positions 309 to 343 are disordered; that stretch reads KLEKTTSEPPPKKEPRSPNAATAEPEAQPKPQPKP. Glutamate 395 is a thiamine diphosphate binding site.

This sequence belongs to the transketolase family. DXPS subfamily. Homodimer. Requires Mg(2+) as cofactor. Thiamine diphosphate serves as cofactor.

It carries out the reaction D-glyceraldehyde 3-phosphate + pyruvate + H(+) = 1-deoxy-D-xylulose 5-phosphate + CO2. Its pathway is metabolic intermediate biosynthesis; 1-deoxy-D-xylulose 5-phosphate biosynthesis; 1-deoxy-D-xylulose 5-phosphate from D-glyceraldehyde 3-phosphate and pyruvate: step 1/1. Functionally, catalyzes the acyloin condensation reaction between C atoms 2 and 3 of pyruvate and glyceraldehyde 3-phosphate to yield 1-deoxy-D-xylulose-5-phosphate (DXP). The polypeptide is 1-deoxy-D-xylulose-5-phosphate synthase (Chromohalobacter salexigens (strain ATCC BAA-138 / DSM 3043 / CIP 106854 / NCIMB 13768 / 1H11)).